We begin with the raw amino-acid sequence, 281 residues long: Phosphatidylglycerol--prolipoprotein diacylglyceryl transferase (281 aa).

A run of 4 helical transmembrane segments spans residues 23 to 43 (VGPL…LFAW), 71 to 91 (FVIW…VLFY), 107 to 127 (WDGG…MILF), and 133 to 153 (ILVW…LGVV). Arg154 is an a 1,2-diacyl-sn-glycero-3-phospho-(1'-sn-glycerol) binding site. 3 consecutive transmembrane segments (helical) span residues 189-209 (LYEA…LVWG), 217-237 (GFVA…VEFF), and 247-267 (LFGG…LLGL).

The protein belongs to the Lgt family.

It localises to the cell inner membrane. It catalyses the reaction L-cysteinyl-[prolipoprotein] + a 1,2-diacyl-sn-glycero-3-phospho-(1'-sn-glycerol) = an S-1,2-diacyl-sn-glyceryl-L-cysteinyl-[prolipoprotein] + sn-glycerol 1-phosphate + H(+). The protein operates within protein modification; lipoprotein biosynthesis (diacylglyceryl transfer). Catalyzes the transfer of the diacylglyceryl group from phosphatidylglycerol to the sulfhydryl group of the N-terminal cysteine of a prolipoprotein, the first step in the formation of mature lipoproteins. This Brucella abortus (strain S19) protein is Phosphatidylglycerol--prolipoprotein diacylglyceryl transferase.